Reading from the N-terminus, the 452-residue chain is CUGBP Elav-like family member 3 (452 aa).

RRM domains are found at residues 7-88 (IKLF…PADS), 94-174 (RKLF…FADT), and 367-445 (CNIF…LKRP).

Belongs to the CELF/BRUNOL family.

The protein localises to the nucleus. It localises to the cytoplasm. Its function is as follows. RNA-binding protein that may be involved in the regulation of pre-mRNA alternative splicing. This chain is CUGBP Elav-like family member 3 (celf3), found in Danio rerio (Zebrafish).